Consider the following 302-residue polypeptide: Oxygen-dependent coproporphyrinogen-III oxidase (302 aa).

Ser94 contacts substrate. His98 and His108 together coordinate a divalent metal cation. His108 (proton donor) is an active-site residue. 110–112 (NVR) is a substrate binding site. Positions 147 and 177 each coordinate a divalent metal cation. Residues 242–277 (YVEFNLVYDRGTLFGLQTGGRTESILMSMPPLARWE) form an important for dimerization region. 260–262 (GGR) contributes to the substrate binding site.

It belongs to the aerobic coproporphyrinogen-III oxidase family. As to quaternary structure, homodimer. It depends on a divalent metal cation as a cofactor.

It localises to the cytoplasm. It catalyses the reaction coproporphyrinogen III + O2 + 2 H(+) = protoporphyrinogen IX + 2 CO2 + 2 H2O. The protein operates within porphyrin-containing compound metabolism; protoporphyrin-IX biosynthesis; protoporphyrinogen-IX from coproporphyrinogen-III (O2 route): step 1/1. In terms of biological role, involved in the heme biosynthesis. Catalyzes the aerobic oxidative decarboxylation of propionate groups of rings A and B of coproporphyrinogen-III to yield the vinyl groups in protoporphyrinogen-IX. The polypeptide is Oxygen-dependent coproporphyrinogen-III oxidase (Aeromonas hydrophila subsp. hydrophila (strain ATCC 7966 / DSM 30187 / BCRC 13018 / CCUG 14551 / JCM 1027 / KCTC 2358 / NCIMB 9240 / NCTC 8049)).